A 959-amino-acid polypeptide reads, in one-letter code: Atromentin synthetase invA1 (959 aa).

The adenylation (A) domain stretch occupies residues 59–466; the sequence is DSSIQTKTFS…SGRIKETVIV (408 aa). One can recognise a Carrier domain in the interval 598 to 676; it reads TPQTETEQTL…SLANYIVALK (79 aa). Residues 603–673 form a thiolation and peptide carrier (T) domain region; that stretch reads TEQTLAAIYA…VVSSLANYIV (71 aa). Ser-635 carries the O-(pantetheine 4'-phosphoryl)serine modification. Residues 699–946 are thioesterase (TE) domain; the sequence is PIFMVHPGVG…LMDFDHVPGF (248 aa).

Belongs to the ATP-dependent AMP-binding enzyme family.

It participates in secondary metabolite biosynthesis. In terms of biological role, an L-tyrosine:2-oxoglutarate aminotransferase (probably invD) and atromentin synthetase invA1 catalyze consecutive steps to turn over L-tyrosine into atromentin, which represents the generic precursor molecule for the entire terphenylquinone and pulvinic acid family of pigments, which are widely distributed secondary metabolites in homobasidiomycetes. The first step catalyzed by the aminotransferase converts L-tyrosine in to 4-hydroxyphenylpyruvate (4-HPP). Adenylation of two 4-HPP monomers by the invA1 adenylation (A) domain, covalent tethering of the monomers as a thioester and oxoester onto the invA1 thiolation (T) and thioesterase (TE) domains, respectively, and symmetric C-C-bond formation between two monomers catalyzed by the invA1 TE domain leads to atromentin. The polypeptide is Atromentin synthetase invA1 (invA1) (Paxillus involutus (Naked brimcap)).